A 622-amino-acid polypeptide reads, in one-letter code: Elongation factor 4 (622 aa).

Residues 17–201 form the tr-type G domain; that stretch reads ALIRNFCIIA…KVVAEVPAPV (185 aa). Residues 29 to 34 and 148 to 151 contribute to the GTP site; these read DHGKST and NKID.

Belongs to the TRAFAC class translation factor GTPase superfamily. Classic translation factor GTPase family. LepA subfamily.

It localises to the cell membrane. It catalyses the reaction GTP + H2O = GDP + phosphate + H(+). Its function is as follows. Required for accurate and efficient protein synthesis under certain stress conditions. May act as a fidelity factor of the translation reaction, by catalyzing a one-codon backward translocation of tRNAs on improperly translocated ribosomes. Back-translocation proceeds from a post-translocation (POST) complex to a pre-translocation (PRE) complex, thus giving elongation factor G a second chance to translocate the tRNAs correctly. Binds to ribosomes in a GTP-dependent manner. This chain is Elongation factor 4, found in Streptomyces avermitilis (strain ATCC 31267 / DSM 46492 / JCM 5070 / NBRC 14893 / NCIMB 12804 / NRRL 8165 / MA-4680).